Consider the following 866-residue polypeptide: E3 ubiquitin-protein ligase RNF216 (866 aa).

3 disordered regions span residues 46–117 (LVTP…NPRS), 131–161 (YTES…SAAL), and 211–240 (EFPG…HPLG). A compositionally biased stretch (acidic residues) spans 55–76 (EEEDLDDDVILTEDDSEDDYGE). Residues Leu80, Thr89, and Lys100 each participate in a glycyl lysine isopeptide (Lys-Gly) (interchain with G-Cter in SUMO2) cross-link. A compositionally biased stretch (polar residues) spans 137–156 (LETQNQSSEDSETELLSNLG). Glycyl lysine isopeptide (Lys-Gly) (interchain with G-Cter in SUMO2) cross-links involve residues Lys351 and Lys354. A Phosphoserine modification is found at Ser419. Residues Lys425, Lys430, Lys448, Lys459, and Lys485 each participate in a glycyl lysine isopeptide (Lys-Gly) (interchain with G-Cter in SUMO2) cross-link. The stretch at 475 to 491 (VQQEQEFYEQKIKEMAE) forms a coiled coil. A TRIAD supradomain region spans residues 511–728 (QLIECRCCYG…SPGAPCQECS (218 aa)). The Zn(2+) site is built by Cys515, Cys518, Cys537, Cys540, Cys605, and Cys608. The RING-type 1 zinc finger occupies 515-564 (CRCCYGEFPFEELTQCADAHLFCKECLIRYAQEAVFGSGKLELSCMEGSC). An IBR-type zinc finger spans residues 583–648 (YKYYERKAEE…LWKEHNGLTC (66 aa)). Lys619 participates in a covalent cross-link: Glycyl lysine isopeptide (Lys-Gly) (interchain with G-Cter in SUMO2). Zn(2+) is bound by residues Cys623, Cys628, Cys633, Cys636, His643, and Cys648. Residues Lys658 and Lys666 each participate in a glycyl lysine isopeptide (Lys-Gly) (interchain with G-Cter in SUMO2) cross-link. Zn(2+)-binding residues include Cys675 and Cys678. An RING-type 2; atypical zinc finger spans residues 675 to 703 (CHKCGTGLIKSEGCNRMSCRCGAQMCYLC). Cys688 is a catalytic residue. Positions 693, 695, 700, 703, and 716 each coordinate Zn(2+). At Ser719 the chain carries Phosphoserine; by MAPK1. Cys724 serves as a coordination point for Zn(2+). Residues 737 to 763 (TEDDEKLIEEIQKEAEEEQKRKNGENT) are a coiled coil. Glycyl lysine isopeptide (Lys-Gly) (interchain with G-Cter in SUMO2) cross-links involve residues Lys765 and Lys773.

As to quaternary structure, interacts with UBE2L3 and to some extent with UBE2L6. Interacts with TRAF3, TLR3, TLR4, TLR5 and TLR9. Isoform 3/ZIN binds RIPK1. In terms of assembly, (Microbial infection) Isoform 3/ZIN binds RIPK1 and HIV Vif. In terms of processing, auto-ubiquitinated. Post-translationally, phosphorylation at Ser-719 enhances acceptor ubiquitin binding and chain-type specificity towards 'Lys-63' di-ubiquitin but not di-ubiquitin with other linkage types. In terms of tissue distribution, ubiquitous, with the highest levels of expression in testis and peripheral blood leukocytes.

The protein resides in the cytoplasm. It localises to the cytoplasmic vesicle. Its subcellular location is the clathrin-coated vesicle. The catalysed reaction is S-ubiquitinyl-[E2 ubiquitin-conjugating enzyme]-L-cysteine + [acceptor protein]-L-lysine = [E2 ubiquitin-conjugating enzyme]-L-cysteine + N(6)-ubiquitinyl-[acceptor protein]-L-lysine.. It participates in protein modification; protein ubiquitination. Its activity is regulated as follows. Allosterically activated by 'Lys-63'-linked di-ubiquitin. Its function is as follows. E3 ubiquitin ligase which accepts ubiquitin from specific E2 ubiquitin-conjugating enzymes, and then transfers it to substrates promoting their ubiquitination. Plays a role in the regulation of antiviral responses by promoting the degradation of TRAF3, TLR4 and TLR9. In turn, down-regulates NF-kappa-B and IRF3 activation as well as beta interferon production. Also participates in the regulation of autophagy by ubiquitinating BECN1 leading to its degradation and autophagy inhibition. Plays a role in ARC-dependent synaptic plasticity by mediating ARC ubiquitination resulting in its rapid proteasomal degradation. Plays aso an essential role in spermatogenesis and male fertility. Mechanistically, regulates meiosis by promoting the degradation of PRKACB through the ubiquitin-mediated lysosome pathway. Modulates the gonadotropin-releasing hormone signal pathway by affecting the stability of STAU2 that is required for the microtubule-dependent transport of neuronal RNA from the cell body to the dendrite. In terms of biological role, inhibits TNF and IL-1 mediated activation of NF-kappa-B. Promotes TNF and RIP mediated apoptosis. In Homo sapiens (Human), this protein is E3 ubiquitin-protein ligase RNF216 (RNF216).